Consider the following 268-residue polypeptide: HTH-type transcriptional activator RhaS (268 aa).

The HTH araC/xylS-type domain maps to 171 to 268 (RQMIRWLENN…YSIAPRELRI (98 aa)). DNA-binding regions (H-T-H motif) lie at residues 188-209 (EELAEKFALPIRTLHRYIKSQT) and 236-259 (IINIAYDCGFNDSSYFSTCFKNEY).

Binds DNA as a dimer.

It is found in the cytoplasm. Functionally, activates expression of the rhaBAD and rhaT operons. This chain is HTH-type transcriptional activator RhaS, found in Mannheimia succiniciproducens (strain KCTC 0769BP / MBEL55E).